Consider the following 399-residue polypeptide: Elongation factor Tu (399 aa).

Positions 10 to 209 constitute a tr-type G domain; the sequence is KPHVNIGTIG…EVDAYIPTPE (200 aa). A G1 region spans residues 19–26; the sequence is GHVDHGKT. GTP is bound at residue 19 to 26; it reads GHVDHGKT. T26 lines the Mg(2+) pocket. The interval 60 to 64 is G2; sequence GITIA. Residues 81 to 84 form a G3 region; sequence DCPG. GTP is bound by residues 81–85 and 136–139; these read DCPGH and NKQD. Residues 136 to 139 form a G4 region; it reads NKQD. The G5 stretch occupies residues 174–176; that stretch reads SAL.

The protein belongs to the TRAFAC class translation factor GTPase superfamily. Classic translation factor GTPase family. EF-Tu/EF-1A subfamily. As to quaternary structure, monomer.

It localises to the cytoplasm. The enzyme catalyses GTP + H2O = GDP + phosphate + H(+). In terms of biological role, GTP hydrolase that promotes the GTP-dependent binding of aminoacyl-tRNA to the A-site of ribosomes during protein biosynthesis. The polypeptide is Elongation factor Tu (Helicobacter pylori (strain ATCC 700392 / 26695) (Campylobacter pylori)).